The chain runs to 788 residues: MNSKIIEKLEYNRIIKQLSDLAITVPAKEQALTLMPSSNFDEVKKSIDQTRVLSNVLRVKGPMPITDFKDVRASLKRLKVKANLNGEELGNIFLILSLAKDVSQFTADLEEREIDTRPIEKTLKNLAIPEDLFKKLNQAIEYDGTVKDTASSKLMQLRHDIQSNETDIKNHMNDYISGKHTQYLSENIVTIRDGRYVLPVKQEYKNKFGGVVHDQSASGQTLFVEPQAVLVLNNRQQNLMAQERQEIHRILIELSELAGMYQKEIKNNADALTQLDFLSAKSKLAKAMKATEPVLNQDHVIKLRKARHPLIDPKKVVPNNIELGTSFDTMLITGPNTGGKTITLKTLGLLQLMAQAGLFITAEEGSQLTVFNEIYADIGDEQSIEQSLSTFSSHMDQIIKIMKDVTEDDLVLIDELGAGTDPEEGASLAIAILDDLRGAQAKIAITTHYPELKLYGYNRARTTNASMEFDLKKLAPTYRLRIGIPGQSNAFAIAHQLGMNEVVVDKARSLMNDEDSDINKMIERLTEQTKAAEQLHETLKQNVDQSITLKRQLQNGLDWYNQQVQKQLEKAQEKADEMLAKKRQKADKIINDLEEQRRAGGQVRTNKVIEAKGALNKLERENQNLAQNKVLQREKRRHDVSVGDTVKVLSYGQQGVITKKLADHEFEVQIGILKVKVTDRDVEKISTQAAPKKAERAVRSSRDLRSTRASSELDLRGQRYEEALTNLDRYIDSSLLAGLNTVTIIHGIGTGAIRNGVQQYLKRNRHVKSYSYAPANQGGTGATIVYLQ.

Position 334 to 341 (334 to 341 (GPNTGGKT)) interacts with ATP. The 76-residue stretch at 713 to 788 (LDLRGQRYEE…GTGATIVYLQ (76 aa)) folds into the Smr domain.

The protein belongs to the DNA mismatch repair MutS family. MutS2 subfamily. In terms of assembly, homodimer. Binds to stalled ribosomes, contacting rRNA.

Endonuclease that is involved in the suppression of homologous recombination and thus may have a key role in the control of bacterial genetic diversity. In terms of biological role, acts as a ribosome collision sensor, splitting the ribosome into its 2 subunits. Detects stalled/collided 70S ribosomes which it binds and splits by an ATP-hydrolysis driven conformational change. Acts upstream of the ribosome quality control system (RQC), a ribosome-associated complex that mediates the extraction of incompletely synthesized nascent chains from stalled ribosomes and their subsequent degradation. Probably generates substrates for RQC. The chain is Endonuclease MutS2 from Lactobacillus johnsonii (strain CNCM I-12250 / La1 / NCC 533).